The chain runs to 1829 residues: Sodium channel protein type 4 subunit alpha A (1829 aa).

The Cytoplasmic segment spans residues 1-124 (MARLLPPTGT…RGAIKILIHS (124 aa)). The segment at 32–52 (STREELEGAEEEPQAPSSDLE) is disordered. Residues 106–421 (CISPFSIVRR…VVAMAYDEQN (316 aa)) form an I repeat. A helical membrane pass occupies residues 125 to 143 (LFSMFIMITILSNCVFMTM). Residues 144–150 (SNPPAWS) are Extracellular-facing. The chain crosses the membrane as a helical span at residues 151–171 (KTVEYVFTGIYTFEATVKVLS). Residues 172 to 185 (RGFCIGPFTFLRDP) are Cytoplasmic-facing. Residues 186–203 (WNWLDFMVISMAYVTEFV) traverse the membrane as a helical segment. Residues 204–209 (DLGNVS) lie on the Extracellular side of the membrane. Asn207 carries an N-linked (GlcNAc...) asparagine glycan. The chain crosses the membrane as a helical span at residues 210 to 226 (ALRTFRVLRALKTITVI). Over 227–245 (PGLKTIVGALIQSVKKMID) the chain is Cytoplasmic. Residues 246–265 (VMILTIFALAVFALIGLQLF) traverse the membrane as a helical segment. The Extracellular segment spans residues 266–358 (MGNLRQKCIR…PNYGYTSYDN (93 aa)). A disulfide bridge links Cys273 with Cys327. Asn280, Asn293, and Asn329 each carry an N-linked (GlcNAc...) asparagine glycan. A disulfide bridge links Cys336 with Cys342. Positions 359–383 (FGWAFLALFRLMTQDFWENLFQLTL) form an intramembrane region, pore-forming. The Extracellular segment spans residues 384–390 (RAAGKTY). Residues 391–411 (MIFFVVVIFLGSFYLINLILA) form a helical membrane-spanning segment. At 412-582 (VVAMAYDEQN…KWVHFVVMDP (171 aa)) the chain is on the cytoplasmic side. Polar residues predominate over residues 446–467 (ETGSKASLASQKTQSRGSNRTG). Residues 446-468 (ETGSKASLASQKTQSRGSNRTGS) form a disordered region. The II repeat unit spans residues 564-836 (CCAPWILFKK…QIAIGRITRG (273 aa)). Residues 583–601 (FVDLGITICIVLNTLFMAM) form a helical membrane-spanning segment. Residues 602-612 (EHYPMSPHFEH) are Extracellular-facing. Residues 613–632 (VLSVGNLVFTGIFTAEMVFK) form a helical membrane-spanning segment. The Cytoplasmic segment spans residues 633–646 (LIAMDPYYYFQVGW). A helical membrane pass occupies residues 647-666 (NIFDSIIVTLSLVELGLANV). At 667 to 668 (QG) the chain is on the extracellular side. Residues 669–686 (LSVLRSFRLLRVFKLAKS) form a helical membrane-spanning segment. Over 687–702 (WPTLNMLIKIIGNSVG) the chain is Cytoplasmic. Residues 703-721 (ALGNLTLVLAIIVFIFAVV) traverse the membrane as a helical segment. At 722–750 (GMQLFGKSYKDCVCKISEDCELPRWHMND) the chain is on the extracellular side. Residues Cys735 and Cys741 are joined by a disulfide bond. An intramembrane region (pore-forming) is located at residues 751-771 (FFHSFLIVFRILCGEWIETMW). The Extracellular portion of the chain corresponds to 772 to 782 (DCMEVAGASMC). An intrachain disulfide couples Cys773 to Cys782. Residues 783–801 (LIVFMMVMVIGNLVVLNLF) form a helical membrane-spanning segment. The Cytoplasmic portion of the chain corresponds to 802–998 (LALLLSSFSG…TCFTIVEHDY (197 aa)). A disordered region spans residues 901–957 (SDVEEDEDSESSDEEDAKATLNDGDSSVCSTVDYQPPEPEPEPEEVEEEEPEPEEPE). Residues 902-916 (DVEEDEDSESSDEED) are compositionally biased toward acidic residues. Over residues 923–933 (DGDSSVCSTVD) the composition is skewed to polar residues. The span at 939 to 957 (PEPEPEEVEEEEPEPEEPE) shows a compositional bias: acidic residues. One copy of the III repeat lies at 979–1292 (WGKKWWNLRR…KKYYNAMKKL (314 aa)). The chain crosses the membrane as a helical span at residues 999-1016 (FETFIIFMILLSSGALAF). Residues 1017–1029 (EDINIERRRVIKT) lie on the Extracellular side of the membrane. Residues 1030-1048 (ILEYADKVFTYIFIVEMLL) traverse the membrane as a helical segment. The Cytoplasmic portion of the chain corresponds to 1049-1062 (KWVAYGFKTYFTNA). Residues 1063–1081 (WCWLDFLIVDVSLVSLTAN) traverse the membrane as a helical segment. Residues 1082-1089 (LMGYSELG) are Extracellular-facing. A helical transmembrane segment spans residues 1090-1108 (AIKSLRTLRALRPLRALSR). Residues 1109 to 1125 (FEGMRVVVNALVGAIPS) lie on the Cytoplasmic side of the membrane. Residues 1126-1145 (IFNVLLVCLIFWLIFSIMGV) traverse the membrane as a helical segment. Residues 1146 to 1196 (NLFAGKFYHCINTTTEERIPMDVVNNKSDCMALMYTNEVRWVNVKVNYDNV) are Extracellular-facing. A disulfide bond links Cys1155 and Cys1175. Residues Asn1157 and Asn1171 are each glycosylated (N-linked (GlcNAc...) asparagine). The segment at residues 1197–1218 (GLGYLSLLQIATFKGWMDIMYA) is an intramembrane region (pore-forming). Over 1219–1235 (AVDSREVDEQPSYEINL) the chain is Extracellular. The helical transmembrane segment at 1236-1257 (YMYLYFVIFIIFGSFFTLNLFI) threads the bilayer. Residues 1258 to 1320 (GVIIDNFNQQ…LVFDFISKQF (63 aa)) are Cytoplasmic-facing. Residues 1276–1278 (IFM) are important for rapid channel inactivation. The stretch at 1301 to 1599 (IPRPSNIIQG…WEKFDVDATQ (299 aa)) is one IV repeat. The helical transmembrane segment at 1321–1338 (FDIFIMVLICLNMVTMMI) threads the bilayer. Residues 1339–1349 (ETDDQSAEKEY) lie on the Extracellular side of the membrane. A helical membrane pass occupies residues 1350–1368 (VLYQINLVFIVVFTSECVL). The Cytoplasmic portion of the chain corresponds to 1369 to 1380 (KLFALRQYFFTI). The chain crosses the membrane as a helical span at residues 1381 to 1398 (GWNVFDFVVVILSIAGLM). Over 1399 to 1411 (LSDIIEKYFVSPT) the chain is Extracellular. A helical transmembrane segment spans residues 1412 to 1428 (LFRVIRLARIGRVLRLI). The Cytoplasmic segment spans residues 1429-1447 (RGAKGIRTLLFALMMSLPA). Residues 1448-1465 (LFNIGLLLFLIMFIFSIF) traverse the membrane as a helical segment. Residues 1466-1487 (GMSNFAYVKKQAGIDDIFNFET) are Extracellular-facing. The segment at residues 1488 to 1510 (FGGSIICLFEITTSAGWDGLLLP) is an intramembrane region (pore-forming). The Extracellular segment spans residues 1511–1540 (ILNSGPPDCDPDFENPGTDVRGNCGNPGMG). Cys1519 and Cys1534 form a disulfide bridge. The helical transmembrane segment at 1541–1563 (IMFFCSYIIMSFLVVVNMYIAII) threads the bilayer. Residues 1564–1829 (LENFNNAQEE…NATTIKESIV (266 aa)) are Cytoplasmic-facing. The IQ domain maps to 1693 to 1722 (EERAAIAVQRIYRRHLLKRAIRYACFMRRS). The disordered stretch occupies residues 1765–1786 (PMRPNSQPPKPSQVTQTRASVT).

This sequence belongs to the sodium channel (TC 1.A.1.10) family. Nav1.4/SCN4A subfamily. As to quaternary structure, voltage-gated sodium (Nav) channels consist of an ion-conducting alpha subunit which is functional on its own associated with regulatory beta subunits. As to expression, expressed in skeletal muscle, brain, spinal cord, and eye.

Its subcellular location is the cell membrane. It carries out the reaction Na(+)(in) = Na(+)(out). Its function is as follows. Pore-forming subunit of a voltage-gated sodium (Nav) channel that directly mediates the depolarizing phase of action potentials in excitable membranes. Navs, also called VGSCs (voltage-gated sodium channels) or VDSCs (voltage-dependent sodium channels), operate by switching between closed and open conformations depending on the voltage difference across the membrane. In the open conformation they allow Na(+) ions to selectively pass through the pore, along their electrochemical gradient. The influx of Na+ ions provokes membrane depolarization, initiating the propagation of electrical signals throughout cells and tissues. This Danio rerio (Zebrafish) protein is Sodium channel protein type 4 subunit alpha A (scn4aa).